We begin with the raw amino-acid sequence, 209 residues long: Uridine kinase (209 aa).

G16–T23 is an ATP binding site.

It belongs to the uridine kinase family.

It is found in the cytoplasm. The enzyme catalyses uridine + ATP = UMP + ADP + H(+). The catalysed reaction is cytidine + ATP = CMP + ADP + H(+). It functions in the pathway pyrimidine metabolism; CTP biosynthesis via salvage pathway; CTP from cytidine: step 1/3. It participates in pyrimidine metabolism; UMP biosynthesis via salvage pathway; UMP from uridine: step 1/1. This is Uridine kinase from Lactiplantibacillus plantarum (strain ATCC BAA-793 / NCIMB 8826 / WCFS1) (Lactobacillus plantarum).